A 350-amino-acid polypeptide reads, in one-letter code: Transmembrane protein 185A (350 aa).

7 helical membrane passes run 16–36 (LIYA…DGII), 41–61 (WAVF…ASVG), 81–101 (FKAM…EVLV), 111–131 (FWLL…AACV), 177–197 (ILMS…VLFL), 211–231 (ITMA…EILL), and 240–260 (AFSC…LMAT). The segment at 298 to 350 (DLHHEDNEETEETPVPEPPKIAPMFRKKARVVITQSPGKYVLPPPKLNIEMPD) is mediates interaction with MAP1B.

Belongs to the TMEM185 family. In terms of assembly, interacts with MAP1B.

The protein localises to the cell projection. Its subcellular location is the dendrite. The protein resides in the membrane. The polypeptide is Transmembrane protein 185A (TMEM185A) (Homo sapiens (Human)).